Consider the following 735-residue polypeptide: 2-5A-dependent ribonuclease (735 aa).

The interval 1–21 (METPDYNTPQGGTPSAGSQRT) is disordered. ANK repeat units follow at residues 24-53 (EDDS…DANA), 58-87 (WGWT…DPHR), 91-120 (NGAT…DVNE), 124-153 (NGFT…NVNL), 167-197 (GGAT…EVDA), 201-234 (MGRN…DVNV), 238-268 (RGKT…NIDA), 272-301 (EGKT…DKCD), and 303-328 (LVWI…NPDT). A binding to TMEV Leader protein region spans residues 26-51 (DSSLIKAVQKGDVVRVQQLLEKGADA). 2 2-5A binding (P-loop) regions span residues 229-242 (GADV…GKTP) and 253-275 (GLVQ…EGKT). Positions 364 to 584 (IHDDYKIAGT…LVDLLGHPFF (221 aa)) constitute a Protein kinase domain. Residues 401–436 (CKEVSCLRDCGDHSNLVAFYGREDDKGCLYVCVSLC) form a C6-type zinc finger. One can recognise a KEN domain in the interval 587-722 (WENRYRTLRN…KHFPQPPPRL (136 aa)). A disordered region spans residues 714-735 (HFPQPPPRLSVPEAVGPGGIQS).

This sequence belongs to the protein kinase superfamily. (Microbial infection) Interacts (via N-terminus) with TMEV leader protein; this interaction prevents RNASEL activation by its substrate 2'-5' oligoadenylates. As to quaternary structure, monomer (inactive form) or homodimer. Interacts with ABCE1; this interaction inhibits the RNASEL. Mn(2+) serves as cofactor. Mg(2+) is required as a cofactor. In terms of tissue distribution, expressed in spleen, thymus, lung, testis, kidney, liver and heart.

The protein resides in the cytoplasm. It is found in the mitochondrion. After binding to 2-5A (5'-phosphorylated 2',5'-linked oligoadenylates) the homodimerization and subsequent activation occurs. Inhibited by RNASEL inhibitor ABCE1/RLI, a cytoplasmic member of the ATP-binding cassette (ABC) transporter family. In terms of biological role, endoribonuclease that functions in the interferon (IFN) antiviral response. In INF treated and virus infected cells, RNASEL probably mediates its antiviral effects through a combination of direct cleavage of single-stranded viral RNAs, inhibition of protein synthesis through the degradation of rRNA, induction of apoptosis, and induction of other antiviral genes. RNASEL mediated apoptosis is the result of a JNK-dependent stress-response pathway leading to cytochrome c release from mitochondria and caspase-dependent apoptosis. Therefore, activation of RNASEL could lead to elimination of virus infected cells under some circumstances. In the crosstalk between autophagy and apoptosis proposed to induce autophagy as an early stress response to small double-stranded RNA and at later stages of prolonged stress to activate caspase-dependent proteolytic cleavage of BECN1 to terminate autophagy and promote apoptosis. Might play a central role in the regulation of mRNA turnover. Cleaves 3' of UpNp dimers, with preference for UU and UA sequences, to sets of discrete products ranging from between 4 and 22 nucleotides in length. This chain is 2-5A-dependent ribonuclease (Rnasel), found in Mus musculus (Mouse).